The following is a 517-amino-acid chain: Probable bifunctional methylthioribulose-1-phosphate dehydratase/enolase-phosphatase E1 (517 aa).

A methylthioribulose-1-phosphate dehydratase region spans residues 1–242 (MACSGCSCEA…CIKLYQLGID (242 aa)). C114 contacts substrate. The Zn(2+) site is built by H132 and H134. E157 acts as the Proton donor/acceptor; for methylthioribulose-1-phosphate dehydratase activity in catalysis. Residue H207 participates in Zn(2+) binding. Residues 278–517 (VVLDIEGTTT…FRTIKSFSEI (240 aa)) form an enolase-phosphatase E1 region. Residues D281 and E283 each coordinate Mg(2+). Substrate is bound by residues 416–417 (SS) and K450. Residue D476 participates in Mg(2+) binding.

This sequence in the N-terminal section; belongs to the aldolase class II family. MtnB subfamily. The protein in the C-terminal section; belongs to the HAD-like hydrolase superfamily. MasA/MtnC family. It depends on Zn(2+) as a cofactor. Mg(2+) is required as a cofactor.

It catalyses the reaction 5-(methylsulfanyl)-D-ribulose 1-phosphate = 5-methylsulfanyl-2,3-dioxopentyl phosphate + H2O. The enzyme catalyses 5-methylsulfanyl-2,3-dioxopentyl phosphate + H2O = 1,2-dihydroxy-5-(methylsulfanyl)pent-1-en-3-one + phosphate. The protein operates within amino-acid biosynthesis; L-methionine biosynthesis via salvage pathway; L-methionine from S-methyl-5-thio-alpha-D-ribose 1-phosphate: step 2/6. Its pathway is amino-acid biosynthesis; L-methionine biosynthesis via salvage pathway; L-methionine from S-methyl-5-thio-alpha-D-ribose 1-phosphate: step 3/6. It participates in amino-acid biosynthesis; L-methionine biosynthesis via salvage pathway; L-methionine from S-methyl-5-thio-alpha-D-ribose 1-phosphate: step 4/6. The protein is Probable bifunctional methylthioribulose-1-phosphate dehydratase/enolase-phosphatase E1 of Zea mays (Maize).